Reading from the N-terminus, the 166-residue chain is Phospholipase A2 inhibitor clone 04 (166 aa).

Positions 1-19 are cleaved as a signal peptide; that stretch reads MRLILLSSLLLLGIFLANG. The 116-residue stretch at 46–161 folds into the C-type lectin domain; sequence LKDAFLTVHR…CDDNRLVVCE (116 aa). 2 disulfides stabilise this stretch: Cys83/Cys160 and Cys138/Cys152. The N-linked (GlcNAc...) asparagine glycan is linked to Asn122.

Belongs to the alpha-type phospholipase A2 inhibitor family. Homotrimer; non-covalently linked. As to expression, expressed by the liver.

It localises to the secreted. In terms of biological role, this phospholipase A2 inhibitor binds directly phospholipase A2 in the presence or absence of calcium. The protein is Phospholipase A2 inhibitor clone 04 of Bothrops moojeni (Lance-headed viper).